A 129-amino-acid chain; its full sequence is Endocuticle structural glycoprotein SgAbd-9 (129 aa).

The residue at position 1 (Gln1) is a Pyrrolidone carboxylic acid. In terms of domain architecture, Chitin-binding type R&amp;R spans 28–98; that stretch reads DGSYTFSYES…VGNVVAPAIS (71 aa). O-linked (HexNAc...) threonine glycosylation occurs at Thr120.

Component of the abdominal endocuticle. This is Endocuticle structural glycoprotein SgAbd-9 from Schistocerca gregaria (Desert locust).